Reading from the N-terminus, the 449-residue chain is UDP-N-acetylmuramate--L-alanine ligase (449 aa).

121 to 127 is a binding site for ATP; sequence GAHGKSS.

This sequence belongs to the MurCDEF family.

It is found in the cytoplasm. It catalyses the reaction UDP-N-acetyl-alpha-D-muramate + L-alanine + ATP = UDP-N-acetyl-alpha-D-muramoyl-L-alanine + ADP + phosphate + H(+). Its pathway is cell wall biogenesis; peptidoglycan biosynthesis. In terms of biological role, cell wall formation. The polypeptide is UDP-N-acetylmuramate--L-alanine ligase (Helicobacter pylori (strain ATCC 700392 / 26695) (Campylobacter pylori)).